The following is a 545-amino-acid chain: CTP synthase (545 aa).

Positions 1–266 (MTTNYIFVTG…DDYICKRFSL (266 aa)) are amidoligase domain. A CTP-binding site is contributed by S14. S14 lines the UTP pocket. ATP contacts are provided by residues 15–20 (SLGKGI) and D72. Mg(2+) contacts are provided by D72 and E140. Residues 147 to 149 (DIE), 187 to 192 (KTKPTQ), and K223 each bind CTP. UTP contacts are provided by residues 187 to 192 (KTKPTQ) and K223. Residue 239 to 241 (KDV) coordinates ATP. The region spanning 291-542 (TIGMVGKYIE…VKAASEYQKR (252 aa)) is the Glutamine amidotransferase type-1 domain. An L-glutamine-binding site is contributed by G352. Catalysis depends on C379, which acts as the Nucleophile; for glutamine hydrolysis. L-glutamine-binding positions include 380-383 (LGMQ), E403, and R470. Catalysis depends on residues H515 and E517.

Belongs to the CTP synthase family. As to quaternary structure, homotetramer.

It carries out the reaction UTP + L-glutamine + ATP + H2O = CTP + L-glutamate + ADP + phosphate + 2 H(+). The enzyme catalyses L-glutamine + H2O = L-glutamate + NH4(+). The catalysed reaction is UTP + NH4(+) + ATP = CTP + ADP + phosphate + 2 H(+). It participates in pyrimidine metabolism; CTP biosynthesis via de novo pathway; CTP from UDP: step 2/2. With respect to regulation, allosterically activated by GTP, when glutamine is the substrate; GTP has no effect on the reaction when ammonia is the substrate. The allosteric effector GTP functions by stabilizing the protein conformation that binds the tetrahedral intermediate(s) formed during glutamine hydrolysis. Inhibited by the product CTP, via allosteric rather than competitive inhibition. Its function is as follows. Catalyzes the ATP-dependent amination of UTP to CTP with either L-glutamine or ammonia as the source of nitrogen. Regulates intracellular CTP levels through interactions with the four ribonucleotide triphosphates. The chain is CTP synthase from Citrobacter koseri (strain ATCC BAA-895 / CDC 4225-83 / SGSC4696).